Consider the following 206-residue polypeptide: Large ribosomal subunit protein mL62 (206 aa).

The transit peptide at 1-29 directs the protein to the mitochondrion; it reads MATAWGLRWGLSRTGTLLLAPPARCARRA. Gln90 is subject to N5-methylglutamine.

The protein belongs to the prokaryotic/mitochondrial release factor family. Mitochondrion-specific ribosomal protein mL62 subfamily. As to quaternary structure, component of the mitochondrial ribosome large subunit (39S) which comprises a 16S rRNA and about 50 distinct proteins. Methylation of glutamine in the GGQ triplet by HEMK1.

The protein resides in the mitochondrion. It catalyses the reaction an N-acyl-L-alpha-aminoacyl-tRNA + H2O = an N-acyl-L-amino acid + a tRNA + H(+). Functionally, essential peptidyl-tRNA hydrolase component of the mitochondrial large ribosomal subunit. Acts as a codon-independent translation release factor that has lost all stop codon specificity and directs the termination of translation in mitochondrion, possibly in case of abortive elongation. May be involved in the hydrolysis of peptidyl-tRNAs that have been prematurely terminated and thus in the recycling of stalled mitochondrial ribosomes. This chain is Large ribosomal subunit protein mL62, found in Mus musculus (Mouse).